The chain runs to 435 residues: tRNA modification GTPase MnmE (435 aa).

(6S)-5-formyl-5,6,7,8-tetrahydrofolate is bound by residues Arg-20, Glu-77, and Lys-117. One can recognise a TrmE-type G domain in the interval 214–359 (GLKIVIAGAP…FIKKLESFCH (146 aa)). Residues 224–229 (NSGKSS), 243–249 (TEEAGTT), and 268–271 (DTAG) contribute to the GTP site. 2 residues coordinate Mg(2+): Ser-228 and Thr-249. Position 435 (Lys-435) interacts with (6S)-5-formyl-5,6,7,8-tetrahydrofolate.

The protein belongs to the TRAFAC class TrmE-Era-EngA-EngB-Septin-like GTPase superfamily. TrmE GTPase family. In terms of assembly, homodimer. Heterotetramer of two MnmE and two MnmG subunits. K(+) is required as a cofactor.

Its subcellular location is the cytoplasm. In terms of biological role, exhibits a very high intrinsic GTPase hydrolysis rate. Involved in the addition of a carboxymethylaminomethyl (cmnm) group at the wobble position (U34) of certain tRNAs, forming tRNA-cmnm(5)s(2)U34. This chain is tRNA modification GTPase MnmE, found in Bartonella tribocorum (strain CIP 105476 / IBS 506).